The chain runs to 148 residues: 3-hydroxyacyl-[acyl-carrier-protein] dehydratase FabZ (148 aa).

The active site involves His48.

Belongs to the thioester dehydratase family. FabZ subfamily.

The protein localises to the cytoplasm. The catalysed reaction is a (3R)-hydroxyacyl-[ACP] = a (2E)-enoyl-[ACP] + H2O. Its function is as follows. Involved in unsaturated fatty acids biosynthesis. Catalyzes the dehydration of short chain beta-hydroxyacyl-ACPs and long chain saturated and unsaturated beta-hydroxyacyl-ACPs. In Campylobacter curvus (strain 525.92), this protein is 3-hydroxyacyl-[acyl-carrier-protein] dehydratase FabZ.